A 153-amino-acid polypeptide reads, in one-letter code: Endoribonuclease YbeY (153 aa).

Positions 118, 122, and 128 each coordinate Zn(2+).

It belongs to the endoribonuclease YbeY family. Requires Zn(2+) as cofactor.

The protein localises to the cytoplasm. Single strand-specific metallo-endoribonuclease involved in late-stage 70S ribosome quality control and in maturation of the 3' terminus of the 16S rRNA. This is Endoribonuclease YbeY from Pelagibacter ubique (strain HTCC1062).